The chain runs to 254 residues: Imidazole glycerol phosphate synthase subunit HisF (254 aa).

Residues D11 and D130 contribute to the active site.

This sequence belongs to the HisA/HisF family. Heterodimer of HisH and HisF.

It localises to the cytoplasm. It catalyses the reaction 5-[(5-phospho-1-deoxy-D-ribulos-1-ylimino)methylamino]-1-(5-phospho-beta-D-ribosyl)imidazole-4-carboxamide + L-glutamine = D-erythro-1-(imidazol-4-yl)glycerol 3-phosphate + 5-amino-1-(5-phospho-beta-D-ribosyl)imidazole-4-carboxamide + L-glutamate + H(+). The protein operates within amino-acid biosynthesis; L-histidine biosynthesis; L-histidine from 5-phospho-alpha-D-ribose 1-diphosphate: step 5/9. Its function is as follows. IGPS catalyzes the conversion of PRFAR and glutamine to IGP, AICAR and glutamate. The HisF subunit catalyzes the cyclization activity that produces IGP and AICAR from PRFAR using the ammonia provided by the HisH subunit. The polypeptide is Imidazole glycerol phosphate synthase subunit HisF (Solibacter usitatus (strain Ellin6076)).